The sequence spans 131 residues: M-zodatoxin-Lt8m (131 aa).

The signal sequence occupies residues Met1–Ser20. A propeptide spanning residues Lys21–Arg60 is cleaved from the precursor.

Belongs to the cationic peptide 06 (cytoinsectotoxin) family. In terms of tissue distribution, expressed by the venom gland.

It localises to the secreted. Insecticidal, cytolytic and antimicrobial peptide. Forms voltage-dependent, ion-permeable channels in membranes. At high concentration causes cell membrane lysis. This Lachesana tarabaevi (Spider) protein is M-zodatoxin-Lt8m (cit 1-13).